Here is a 385-residue protein sequence, read N- to C-terminus: Putative 8-amino-7-oxononanoate synthase (385 aa).

Residue Arg-21 coordinates substrate. 108 to 109 provides a ligand contact to pyridoxal 5'-phosphate; it reads GY. His-133 contacts substrate. Residues Ser-182, 207–210, and 234–237 each bind pyridoxal 5'-phosphate; these read DEAH and TFGK. Lys-237 is modified (N6-(pyridoxal phosphate)lysine). Substrate is bound at residue Ser-351.

It belongs to the class-II pyridoxal-phosphate-dependent aminotransferase family. BioF subfamily. Homodimer. Requires pyridoxal 5'-phosphate as cofactor.

The enzyme catalyses 6-carboxyhexanoyl-[ACP] + L-alanine + H(+) = (8S)-8-amino-7-oxononanoate + holo-[ACP] + CO2. Its pathway is cofactor biosynthesis; biotin biosynthesis. In terms of biological role, catalyzes the decarboxylative condensation of pimeloyl-[acyl-carrier protein] and L-alanine to produce 8-amino-7-oxononanoate (AON), [acyl-carrier protein], and carbon dioxide. The chain is Putative 8-amino-7-oxononanoate synthase (bioF) from Desulfosudis oleivorans (strain DSM 6200 / JCM 39069 / Hxd3) (Desulfococcus oleovorans).